Here is a 332-residue protein sequence, read N- to C-terminus: Peroxidase C1C (332 aa).

Residues 1–9 (MLHASFSNA) form the signal peptide. Gln10 is modified (pyrrolidone carboxylic acid). Intrachain disulfides connect Cys20/Cys100, Cys53/Cys58, Cys106/Cys310, and Cys186/Cys218. The N-linked (GlcNAc...) asparagine glycan is linked to Asn22. Residue His51 is the Proton acceptor of the active site. 5 residues coordinate Ca(2+): Asp52, Val55, Gly57, Asp59, and Ser61. Asn66 carries N-linked (GlcNAc...) asparagine glycosylation. Pro148 is a substrate binding site. Heme b is bound at residue His179. Thr180 contacts Ca(2+). 3 N-linked (GlcNAc...) asparagine glycosylation sites follow: Asn195, Asn207, and Asn223. 3 residues coordinate Ca(2+): Asp231, Thr234, and Asp239. The N-linked (GlcNAc...) asparagine glycan is linked to Asn264.

Belongs to the peroxidase family. Classical plant (class III) peroxidase subfamily. It depends on Ca(2+) as a cofactor. Heme b serves as cofactor.

Its subcellular location is the secreted. The protein resides in the vacuole. It catalyses the reaction 2 a phenolic donor + H2O2 = 2 a phenolic radical donor + 2 H2O. Its function is as follows. Removal of H(2)O(2), oxidation of toxic reductants, biosynthesis and degradation of lignin, suberization, auxin catabolism, response to environmental stresses such as wounding, pathogen attack and oxidative stress. These functions might be dependent on each isozyme/isoform in each plant tissue. This is Peroxidase C1C (PRXC1C) from Armoracia rusticana (Horseradish).